The primary structure comprises 363 residues: 5-formaminoimidazole-4-carboxamide-1-(beta)-D-ribofuranosyl 5'-monophosphate synthetase (363 aa).

5-amino-1-(5-phospho-beta-D-ribosyl)imidazole-4-carboxamide is bound by residues H29 and S96. The region spanning 118–354 (RDILRWEAER…IALEIKNAIK (237 aa)) is the ATP-grasp domain. ATP contacts are provided by residues 148 to 210 (PSEI…CNYC) and E232. N260 provides a ligand contact to 5-amino-1-(5-phospho-beta-D-ribosyl)imidazole-4-carboxamide. Mg(2+) contacts are provided by Q299 and E312.

The protein belongs to the phosphohexose mutase family. It depends on Mg(2+) as a cofactor. Mn(2+) is required as a cofactor.

The catalysed reaction is 5-amino-1-(5-phospho-beta-D-ribosyl)imidazole-4-carboxamide + formate + ATP = 5-formamido-1-(5-phospho-D-ribosyl)imidazole-4-carboxamide + ADP + phosphate. It participates in purine metabolism; IMP biosynthesis via de novo pathway; 5-formamido-1-(5-phospho-D-ribosyl)imidazole-4-carboxamide from 5-amino-1-(5-phospho-D-ribosyl)imidazole-4-carboxamide (formate route): step 1/1. Its function is as follows. Catalyzes the ATP- and formate-dependent formylation of 5-aminoimidazole-4-carboxamide-1-beta-d-ribofuranosyl 5'-monophosphate (AICAR) to 5-formaminoimidazole-4-carboxamide-1-beta-d-ribofuranosyl 5'-monophosphate (FAICAR) in the absence of folates. This chain is 5-formaminoimidazole-4-carboxamide-1-(beta)-D-ribofuranosyl 5'-monophosphate synthetase, found in Methanobrevibacter smithii (strain ATCC 35061 / DSM 861 / OCM 144 / PS).